The primary structure comprises 1392 residues: MATKAKSVGQALEATATKRIRKLFGNIHEAVEMPNLIEVQRESYEQFLRSDPSIGYVSGLEKTLRSVFPIRDFAGTAELDFVHYELEAPKYDVEECRQRGITYAAPMKVTLRLIVFEVDSETDTRSVLDIKEQDVYMGDMPLMTENGTFFVNGTERVIVSQMHRSPGVLFDHDRGKTHSSGKFLFAARVIPYRGSWLDFEFDAKDIVNVRIDRKRKLPVTSLLYALGMTGEEILNHFYDRLVFERAENGWKVPFMVENWRGSKPAFDVVDAKTGEVVFAAGHKISPRLANKAAKDGLDTLLIPTEEIFGRYSAYDLINESTGEIYIEAGDEVSAENLEKLDAAGIDKLVLLDIDHNNTGPWIRNTLKADKAEDRDQALSDIYRVMRPGEPPTRETAEALFAGLFFDPERYDLSAVGRVKLNMRLGLDAEDTVTTLRSEDILAVVKELVNLKDGKGEIDDIDNLGNRRVRSVGELLENQYRVGLLRMERAVKERMSSVDVSTVMPNDLINAKPAVAAVREFFGSSQLSQFMDQTNPLSEVTHKRRVSALGPGGLTRERAGFEVRDVHPTHYGRICPIETPEGPNIGLINSLATFARVNKYGFIETPYRRVVDGKVTNEVVYLSAMEESKHTVAQANADLNPDGSFIDELISAREAGEFLMAPREQITLMDVSPKQLVSVAASLIPFLENDDANRALMGSNMQRQAVPLLRAEAPVVGTGMEETVARDSGAAIAARRGGVIDQVDATRIVIRATDMVEPGKSGVDIYRLQKFQRSNQNTCINQRPLVKVGDVVRAGDIIADGPSTELGELALGKNVLVAFMPWNGYNYEDSILISERIVKDDVFTSIHIEEFEVTARDTRLGPEDITRDIPNVGEEALRNLDEAGIVYIGAEVGPGDILAGKITPKGESPMTPEEKLLRAIFGEKASDVRDTSLRLPPGVSGTVVEVRVFNRHGIDKDERAIAIEREEIERLKQDADDERAILNRATFSSLKDLLVGQATSAVPKGLKKGDIVTEEMLVGLDRADWWKLAVVDDKAQTALEAIKAQYDDAIKRINAKYEDRVEKLQRGDELAPGVLKMVKVFVAVKRKLQPGDKMAGRHGNKGVISRILPVEDMPFLEDGTPVDIVLNPLGVPSRMNVGQILETHLGWASRGLGQQVTRALEEWRDANPDATGGEMPEAVREKLEHVYGAEYVEDIRSRDAEGIIELASNLKVGVPFATPVFDGAKEADVSNMLTLAGLDESGQSDLYDGRTGDKFDRKVTVGYIYMLKLHHLVDDKIHARSIGPYSLVTQQPLGGKAQFGGQRFGEMEVWALQAYGAAYTLQEMLTVKSDDVIGRTKVYEAIVKGDDTFEAGIPESFNVLVKEMRSLGLNVELSSYAEEDPDEGPEALPEAAE.

The interval 1372–1392 (LSSYAEEDPDEGPEALPEAAE) is disordered.

The protein belongs to the RNA polymerase beta chain family. In terms of assembly, the RNAP catalytic core consists of 2 alpha, 1 beta, 1 beta' and 1 omega subunit. When a sigma factor is associated with the core the holoenzyme is formed, which can initiate transcription.

It carries out the reaction RNA(n) + a ribonucleoside 5'-triphosphate = RNA(n+1) + diphosphate. DNA-dependent RNA polymerase catalyzes the transcription of DNA into RNA using the four ribonucleoside triphosphates as substrates. In Sphingopyxis alaskensis (strain DSM 13593 / LMG 18877 / RB2256) (Sphingomonas alaskensis), this protein is DNA-directed RNA polymerase subunit beta.